Here is a 485-residue protein sequence, read N- to C-terminus: Apolipoprotein N-acyltransferase (485 aa).

Transmembrane regions (helical) follow at residues 8–28 (IAGAILPLAFAPFNWFPIAFV), 49–69 (GWLFGFGFFGAGASWVYVSIH), 76–96 (VPLAVLITVLFVFVLALFIAF), 121–141 (WWVVWEWLRSILFTGFPWLFL), 157–177 (FGIYGISLIVAFISGCIYLLV), and 186–206 (IMCLILIILPFIVGWVLTFIP). The 238-residue stretch at 220–457 (VQGNIGQRLK…RLLLTGQIKP (238 aa)) folds into the CN hydrolase domain. The Proton acceptor role is filled by glutamate 259. Lysine 317 is an active-site residue. Catalysis depends on cysteine 369, which acts as the Nucleophile. A helical transmembrane segment spans residues 464 to 484 (LMRWNYYPVVGIIIIFLLLTF).

Belongs to the CN hydrolase family. Apolipoprotein N-acyltransferase subfamily.

It is found in the cell inner membrane. It catalyses the reaction N-terminal S-1,2-diacyl-sn-glyceryl-L-cysteinyl-[lipoprotein] + a glycerophospholipid = N-acyl-S-1,2-diacyl-sn-glyceryl-L-cysteinyl-[lipoprotein] + a 2-acyl-sn-glycero-3-phospholipid + H(+). The protein operates within protein modification; lipoprotein biosynthesis (N-acyl transfer). Catalyzes the phospholipid dependent N-acylation of the N-terminal cysteine of apolipoprotein, the last step in lipoprotein maturation. The protein is Apolipoprotein N-acyltransferase of Coxiella burnetii (strain RSA 493 / Nine Mile phase I).